The sequence spans 241 residues: Probable transcriptional regulatory protein lin1570 (241 aa).

Over residues 1–14 the composition is skewed to polar residues; sequence MAGHSKWNNIQGRK. The interval 1 to 22 is disordered; it reads MAGHSKWNNIQGRKNAQDSKRS.

This sequence belongs to the TACO1 family.

It is found in the cytoplasm. The sequence is that of Probable transcriptional regulatory protein lin1570 from Listeria innocua serovar 6a (strain ATCC BAA-680 / CLIP 11262).